The following is a 1321-amino-acid chain: Lysine-specific demethylase 3A (1321 aa).

Residues Ser-264 and Ser-325 each carry the phosphoserine modification. Disordered regions lie at residues 307–336, 383–402, and 438–472; these read ATPP…IPQG, LTEP…QENR, and KHLE…GKKV. The segment covering 316–327 has biased composition (polar residues); it reads QQSTPQAANSPP. Ser-445 carries the phosphoserine modification. The C6-type zinc finger occupies 662–687; it reads CDVCDTTIFNLHWVCPRCGFGVCVDC. Ser-766 is modified (phosphoserine). The short motif at 885-889 is the LXXLL motif element; the sequence is LRNLL. N6-acetyllysine is present on Lys-895. The region spanning 1058 to 1281 is the JmjC domain; sequence MPSRFDDLMA…HCFWLTQEFR (224 aa). Residues His-1120, Asp-1122, and His-1249 each contribute to the Fe cation site.

Belongs to the JHDM2 histone demethylase family. As to quaternary structure, interacts with VRK1. The cofactor is Fe(2+).

It localises to the cytoplasm. The protein resides in the nucleus. The enzyme catalyses N(6),N(6)-dimethyl-L-lysyl(9)-[histone H3] + 2 2-oxoglutarate + 2 O2 = L-lysyl(9)-[histone H3] + 2 formaldehyde + 2 succinate + 2 CO2. Histone demethylase that specifically demethylates 'Lys-9' of histone H3, thereby playing a central role in histone code. Preferentially demethylates mono- and dimethylated H3 'Lys-9' residue, with a preference for dimethylated residue, while it has weak or no activity on trimethylated H3 'Lys-9'. Demethylation of Lys residue generates formaldehyde and succinate. Involved in hormone-dependent transcriptional activation, by participating in recruitment to androgen-receptor target genes, resulting in H3 'Lys-9' demethylation and transcriptional activation. Involved in spermatogenesis by regulating expression of target genes such as PRM1 and TNP1 which are required for packaging and condensation of sperm chromatin. Involved in obesity resistance through regulation of metabolic genes such as PPARA and UCP1. The sequence is that of Lysine-specific demethylase 3A (KDM3A) from Homo sapiens (Human).